Here is a 239-residue protein sequence, read N- to C-terminus: Probable 2-phosphosulfolactate phosphatase (239 aa).

This sequence belongs to the ComB family. It depends on Mg(2+) as a cofactor.

The catalysed reaction is (2R)-O-phospho-3-sulfolactate + H2O = (2R)-3-sulfolactate + phosphate. The protein is Probable 2-phosphosulfolactate phosphatase of Clostridium botulinum (strain 657 / Type Ba4).